The sequence spans 41 residues: Large ribosomal subunit protein bL36 (41 aa).

Belongs to the bacterial ribosomal protein bL36 family.

The sequence is that of Large ribosomal subunit protein bL36 from Rhodopseudomonas palustris (strain BisB18).